The sequence spans 486 residues: MKTLTQLHFDNRFARLGDTFSTQVSPQPLEAPRLVVASEAAMALLDLDPAEAEQALFAELFSGHKIWSTAEPRAMVYSGHQFGSYNPQLGDGRGLLLGEVVNEAGEYWDLHLKGAGKTPYSRMGDGRAVLRSSIREFLASEHLHALGIPSSRALCVTGSDTLVYRERPERGAMLLRLAPSHVRFGHFEFFYYTRQHGELKQLLEHVIEVHFPELLEHPEPFHMFFRTVLERTAALIARWQAYGFCHGVMNTDNMSILGITFDFGPYAFLDDFDARFICNHSDDTGRYSFENQVPIAHWNLAALAQALTPFVEVKVLRETMELFLPLYEAEWLDLMRRRLGFSQAEDGDAELIRRLLQLMQGSAVDYTRFFRELGERPAEQAVQRLREDFIDLQGFDAWAADYCARSAREGGDPVARQARMHAVNPKYILRNYLAQQAIEAAEKGDYAPVRELHAVLSRPFDEQPGMERYAERPPEWGKHLEISCSS.

G90, G92, R93, K113, D125, G126, R176, and R183 together coordinate ATP. The Proton acceptor role is filled by D252. Residues N253 and D262 each contribute to the Mg(2+) site. D262 is a binding site for ATP.

This sequence belongs to the SELO family. Mg(2+) is required as a cofactor. The cofactor is Mn(2+).

It carries out the reaction L-seryl-[protein] + ATP = 3-O-(5'-adenylyl)-L-seryl-[protein] + diphosphate. The catalysed reaction is L-threonyl-[protein] + ATP = 3-O-(5'-adenylyl)-L-threonyl-[protein] + diphosphate. The enzyme catalyses L-tyrosyl-[protein] + ATP = O-(5'-adenylyl)-L-tyrosyl-[protein] + diphosphate. It catalyses the reaction L-histidyl-[protein] + UTP = N(tele)-(5'-uridylyl)-L-histidyl-[protein] + diphosphate. It carries out the reaction L-seryl-[protein] + UTP = O-(5'-uridylyl)-L-seryl-[protein] + diphosphate. The catalysed reaction is L-tyrosyl-[protein] + UTP = O-(5'-uridylyl)-L-tyrosyl-[protein] + diphosphate. In terms of biological role, nucleotidyltransferase involved in the post-translational modification of proteins. It can catalyze the addition of adenosine monophosphate (AMP) or uridine monophosphate (UMP) to a protein, resulting in modifications known as AMPylation and UMPylation. This is Protein nucleotidyltransferase YdiU from Stutzerimonas stutzeri (strain A1501) (Pseudomonas stutzeri).